The primary structure comprises 483 residues: MTSYSISVSVKGTNINKYPGKQHARRVAARLAKQKGLIYLPGQQTVLSEDSDQARPFKQRRYFFYVTGVVEPDCHVTYDIAEDKLTLYVPDFDFKRTIWTGPTLGKDDAKQRYDVDAVEYYSSLEGDVQRWAQGNPSTPIYILHPDQKPVTPLTVAYLYESKSLQHAMDACRVIKDEHESEAQIAGLFIDVCLSLRSRGTAYQTIAASGPNGATLHYTRNNEPLAGRQMVVLDAGAEWDCYASDVTRSFPIPSSVSGKENSGKGDWPSREAEEVYAIVQRMQEESISRVREGAMFFSIHQHAHSIALDELLRLGILRIPHGSSKADLVKAEATALFFPHGLGHHLGLEVHDVAPDSGTVPVTSSSSSSSSRVTAVTAQCQDGLMSVTEHRPPCTLSAPPLAAGMVITVEPGIYFNRLAIDQARAERDKPGSKGRFVDFDVVERYMAVGGVRIEDDVLVTKDGSRNLTDAPKGQDMLDMIYDRC.

Mn(2+) contacts are provided by D233, D244, E409, and E453.

The protein belongs to the peptidase M24B family. Mn(2+) serves as cofactor.

The catalysed reaction is Release of any N-terminal amino acid, including proline, that is linked to proline, even from a dipeptide or tripeptide.. Its function is as follows. Catalyzes the removal of a penultimate prolyl residue from the N-termini of peptides. The chain is Probable Xaa-Pro aminopeptidase MCYG_06503 from Arthroderma otae (strain ATCC MYA-4605 / CBS 113480) (Microsporum canis).